A 449-amino-acid chain; its full sequence is Glucose-6-phosphate isomerase (449 aa).

Glu291 serves as the catalytic Proton donor. Catalysis depends on residues His312 and Lys426.

This sequence belongs to the GPI family.

The protein localises to the cytoplasm. The catalysed reaction is alpha-D-glucose 6-phosphate = beta-D-fructose 6-phosphate. It participates in carbohydrate biosynthesis; gluconeogenesis. Its pathway is carbohydrate degradation; glycolysis; D-glyceraldehyde 3-phosphate and glycerone phosphate from D-glucose: step 2/4. Its function is as follows. Catalyzes the reversible isomerization of glucose-6-phosphate to fructose-6-phosphate. This Clostridium botulinum (strain Alaska E43 / Type E3) protein is Glucose-6-phosphate isomerase.